Here is a 469-residue protein sequence, read N- to C-terminus: Ribulose bisphosphate carboxylase large chain (469 aa).

Lysine 5 bears the N6,N6,N6-trimethyllysine mark. Residues asparagine 114 and threonine 164 each coordinate substrate. Lysine 166 serves as the catalytic Proton acceptor. Lysine 168 contributes to the substrate binding site. Mg(2+)-binding residues include lysine 192, aspartate 194, and glutamate 195. Lysine 192 carries the post-translational modification N6-carboxylysine. Histidine 285 functions as the Proton acceptor in the catalytic mechanism. Arginine 286, histidine 318, and serine 370 together coordinate substrate.

The protein belongs to the RuBisCO large chain family. Type I subfamily. Heterohexadecamer of 8 large chains and 8 small chains; disulfide-linked. The disulfide link is formed within the large subunit homodimers. Mg(2+) serves as cofactor. In terms of processing, the disulfide bond which can form in the large chain dimeric partners within the hexadecamer appears to be associated with oxidative stress and protein turnover.

It is found in the plastid. The protein localises to the chloroplast. The enzyme catalyses 2 (2R)-3-phosphoglycerate + 2 H(+) = D-ribulose 1,5-bisphosphate + CO2 + H2O. It catalyses the reaction D-ribulose 1,5-bisphosphate + O2 = 2-phosphoglycolate + (2R)-3-phosphoglycerate + 2 H(+). RuBisCO catalyzes two reactions: the carboxylation of D-ribulose 1,5-bisphosphate, the primary event in carbon dioxide fixation, as well as the oxidative fragmentation of the pentose substrate in the photorespiration process. Both reactions occur simultaneously and in competition at the same active site. This Calycophyllum candidissimum (Degame lemonwood tree) protein is Ribulose bisphosphate carboxylase large chain.